A 967-amino-acid polypeptide reads, in one-letter code: Vacuolar membrane protease (967 aa).

Residues 1 to 16 lie on the Cytoplasmic side of the membrane; it reads MARPSLSRSNPLGFTP. A helical transmembrane segment spans residues 17 to 37; that stretch reads WPVTVITAVVYLALVVPLLVV. The Vacuolar segment spans residues 38–387; that stretch reads HHVVPSAPSS…SAFVVFELHT (350 aa). N-linked (GlcNAc...) asparagine glycosylation is found at asparagine 53 and asparagine 119. Residues histidine 171 and aspartate 183 each contribute to the Zn(2+) site. Catalysis depends on glutamate 217, which acts as the Proton acceptor. Residues glutamate 218, glutamate 243, and histidine 316 each contribute to the Zn(2+) site. The helical transmembrane segment at 388-408 threads the bilayer; it reads LFALSVTLLVVAPLVLLVTSI. Residues 409 to 441 lie on the Cytoplasmic side of the membrane; the sequence is ALNRADKMYLFRASASPEDSDGSEAVLLHGVRG. The helical transmembrane segment at 442 to 462 threads the bilayer; the sequence is FFRFPFLLVIPTAVTVGLAYL. Residues 463 to 472 lie on the Vacuolar side of the membrane; the sequence is VTKFNPYIIH. Residues 473-493 form a helical membrane-spanning segment; sequence SSEYAVWSMMISAWVFLAWFV. Residues 494–507 lie on the Cytoplasmic side of the membrane; sequence SRVADFARPSAFHR. Residues 508 to 528 form a helical membrane-spanning segment; sequence VYTLTWLFLVEWVLLVISTVY. Topologically, residues 529–532 are vacuolar; the sequence is ENKY. A helical membrane pass occupies residues 533–553; that stretch reads GLAGGYFVFFAFAGTFLATWI. The Cytoplasmic portion of the chain corresponds to 554–663; that stretch reads SYLELFALPR…WSIHLPKWVW (110 aa). The interval 579–612 is disordered; the sequence is SSHGSRLGTASGEDVEDGEDEDEDDDGTTAEATE. Over residues 591–606 the composition is skewed to acidic residues; that stretch reads EDVEDGEDEDEDDDGT. Residues 664–684 traverse the membrane as a helical segment; it reads VLQFLLTAPLVLTFVGPLALL. At 685-700 the chain is on the vacuolar side; it reads LTSALRQTGQDGSSSL. A helical transmembrane segment spans residues 701–721; that stretch reads FIYIAVAALTTLLFIPLLPFI. Residues 722–727 lie on the Cytoplasmic side of the membrane; it reads HRYTHH. A helical membrane pass occupies residues 728 to 748; it reads IPLFLLCVFAGTLIYNLVAFP. At 749 to 967 the chain is on the vacuolar side; the sequence is FSPANRLKLF…LVEGSRRFEI (219 aa). Asparagine 795 and asparagine 832 each carry an N-linked (GlcNAc...) asparagine glycan.

Belongs to the peptidase M28 family. The cofactor is Zn(2+).

The protein resides in the vacuole membrane. Its function is as follows. May be involved in vacuolar sorting and osmoregulation. This is Vacuolar membrane protease from Neosartorya fischeri (strain ATCC 1020 / DSM 3700 / CBS 544.65 / FGSC A1164 / JCM 1740 / NRRL 181 / WB 181) (Aspergillus fischerianus).